The chain runs to 744 residues: Elongation factor G, mitochondrial (744 aa).

The transit peptide at 1–25 (MTISCLLRIRPALAKSFFENGQRAF) directs the protein to the mitochondrion. The 278-residue stretch at 38 to 315 (ERIRNIGISA…AVLDYLPNPG (278 aa)) folds into the tr-type G domain. GTP is bound by residues 47–54 (AHIDSGKT), 114–118 (DTPGH), and 168–171 (NKLD).

Belongs to the TRAFAC class translation factor GTPase superfamily. Classic translation factor GTPase family. EF-G/EF-2 subfamily.

The protein resides in the mitochondrion. Its pathway is protein biosynthesis; polypeptide chain elongation. Its function is as follows. Mitochondrial GTPase that catalyzes the GTP-dependent ribosomal translocation step during translation elongation. During this step, the ribosome changes from the pre-translocational (PRE) to the post-translocational (POST) state as the newly formed A-site-bound peptidyl-tRNA and P-site-bound deacylated tRNA move to the P and E sites, respectively. Catalyzes the coordinated movement of the two tRNA molecules, the mRNA and conformational changes in the ribosome. The protein is Elongation factor G, mitochondrial of Culex quinquefasciatus (Southern house mosquito).